The primary structure comprises 269 residues: uncharacterized protein (269 aa).

The region spanning 152-197 (RYFSKPAYRNAFKANTIRATTAYKKVFNDPSLGSTYPLEVPLGKMS) is the RPE1 insert domain.

This is an uncharacterized protein from Rickettsia prowazekii (strain Madrid E).